Consider the following 543-residue polypeptide: RuBisCO large subunit-binding protein subunit alpha, chloroplastic (543 aa).

A chloroplast-targeting transit peptide spans 1-2 (GA).

The protein belongs to the chaperonin (HSP60) family. As to quaternary structure, oligomer of probably six alpha and six beta subunits.

The protein localises to the plastid. It is found in the chloroplast. In terms of biological role, this protein binds RuBisCO small and large subunits and is implicated in the assembly of the enzyme oligomer. This is RuBisCO large subunit-binding protein subunit alpha, chloroplastic from Triticum aestivum (Wheat).